A 71-amino-acid chain; its full sequence is Exodeoxyribonuclease 7 small subunit (71 aa).

The protein belongs to the XseB family. As to quaternary structure, heterooligomer composed of large and small subunits.

The protein resides in the cytoplasm. The enzyme catalyses Exonucleolytic cleavage in either 5'- to 3'- or 3'- to 5'-direction to yield nucleoside 5'-phosphates.. Bidirectionally degrades single-stranded DNA into large acid-insoluble oligonucleotides, which are then degraded further into small acid-soluble oligonucleotides. This Streptococcus agalactiae serotype Ia (strain ATCC 27591 / A909 / CDC SS700) protein is Exodeoxyribonuclease 7 small subunit.